A 318-amino-acid chain; its full sequence is Zinc chaperone YjiA (318 aa).

11-19 contributes to the GTP binding site; sequence GFLGAGKTT. The Zn(2+) site is built by glutamate 37, glutamate 42, cysteine 66, glutamate 74, and histidine 114. The CXCC motif motif lies at 64-67; sequence CICC. Residue aspartate 161 participates in GTP binding. Zn(2+)-binding residues include glutamate 167, histidine 170, and histidine 187. The CobW C-terminal domain occupies 224–315; that stretch reads ISSIVVELDY…EEEIRAAFAG (92 aa).

The protein belongs to the SIMIBI class G3E GTPase family. ZNG1 subfamily. Monomer in the apo form. Metal binding induces oligomerization. Forms homodimers and higher oligomers.

The catalysed reaction is GTP + H2O = GDP + phosphate + H(+). With respect to regulation, GTPase activity is inhibited by metal binding. Activity is decreased in the presence of Co(II) or Ni(II), and is completely inhibited in the presence of Zn(II). In terms of biological role, zinc chaperone that directly transfers zinc cofactor to target proteins, thereby activating them. Zinc is transferred from the CXCC motif in the GTPase domain to the zinc binding site in target proteins in a process requiring GTP hydrolysis. The chain is Zinc chaperone YjiA (yjiA) from Escherichia coli (strain K12).